The primary structure comprises 102 residues: Small ribosomal subunit protein uS10 (102 aa).

This sequence belongs to the universal ribosomal protein uS10 family. As to quaternary structure, part of the 30S ribosomal subunit.

Functionally, involved in the binding of tRNA to the ribosomes. The protein is Small ribosomal subunit protein uS10 of Leptospira borgpetersenii serovar Hardjo-bovis (strain JB197).